Here is a 385-residue protein sequence, read N- to C-terminus: uncharacterized protein (385 aa).

Belongs to the phage portal family. HK97 subfamily.

This is an uncharacterized protein from Rickettsia felis (strain ATCC VR-1525 / URRWXCal2) (Rickettsia azadi).